We begin with the raw amino-acid sequence, 393 residues long: NAD(P)H-quinone oxidoreductase subunit H 1 (393 aa).

Belongs to the complex I 49 kDa subunit family. NDH-1 can be composed of about 15 different subunits; different subcomplexes with different compositions have been identified which probably have different functions.

The protein resides in the cell inner membrane. The catalysed reaction is a plastoquinone + NADH + (n+1) H(+)(in) = a plastoquinol + NAD(+) + n H(+)(out). It carries out the reaction a plastoquinone + NADPH + (n+1) H(+)(in) = a plastoquinol + NADP(+) + n H(+)(out). Functionally, NDH-1 shuttles electrons from an unknown electron donor, via FMN and iron-sulfur (Fe-S) centers, to quinones in the respiratory and/or the photosynthetic chain. The immediate electron acceptor for the enzyme in this species is believed to be plastoquinone. Couples the redox reaction to proton translocation, and thus conserves the redox energy in a proton gradient. Cyanobacterial NDH-1 also plays a role in inorganic carbon-concentration. This is NAD(P)H-quinone oxidoreductase subunit H 1 from Gloeobacter violaceus (strain ATCC 29082 / PCC 7421).